A 111-amino-acid chain; its full sequence is MIGIVLVLASLLSVGGQLCQKQATRPLTTGRRRRHLMLWLGLALICMGAAMVLWLLVLQTLPVGIAYPMLSLNFVWVTLAAWKIWHEQVPPRHWLGVALIISGIIILGSAA.

3 helical membrane-spanning segments follow: residues 38–58 (LWLGLALICMGAAMVLWLLVL), 61–81 (LPVGIAYPMLSLNFVWVTLAA), and 91–111 (PRHWLGVALIISGIIILGSAA). One can recognise an EamA domain in the interval 40-109 (LGLALICMGA…IISGIIILGS (70 aa)).

The protein belongs to the ArnE family. In terms of assembly, heterodimer of ArnE and ArnF.

Its subcellular location is the cell inner membrane. The protein operates within bacterial outer membrane biogenesis; lipopolysaccharide biosynthesis. Translocates 4-amino-4-deoxy-L-arabinose-phosphoundecaprenol (alpha-L-Ara4N-phosphoundecaprenol) from the cytoplasmic to the periplasmic side of the inner membrane. This Salmonella choleraesuis (strain SC-B67) protein is Probable 4-amino-4-deoxy-L-arabinose-phosphoundecaprenol flippase subunit ArnE.